The chain runs to 175 residues: MMAKKRVATDNAADAKMELANRLFFRLYQCANMLHKTGTRAVEAEGLTTQQWAVLGALSRPTVANGMSVGDLARYLMVSRQNLTGLIGRMERDGHVAVVPDERDRRSRLVTMTKSGRHVWEVLAQPKIRAYYGEVLGDFSINDVTHTLHYLLKILDNMKRLDDGAAGETAATDLE.

Residues 20 to 156 (ANRLFFRLYQ…TLHYLLKILD (137 aa)) enclose the HTH marR-type domain.

Its function is as follows. Transcriptional activator of genes for the anaerobic degradation of benzoate. In Rhodopseudomonas palustris (strain ATCC BAA-98 / CGA009), this protein is Transcriptional activatory protein BadR (badR).